Reading from the N-terminus, the 81-residue chain is Large ribosomal subunit protein bL31B (81 aa).

It belongs to the bacterial ribosomal protein bL31 family. Type B subfamily. In terms of assembly, part of the 50S ribosomal subunit.

In Cutibacterium acnes (strain DSM 16379 / KPA171202) (Propionibacterium acnes), this protein is Large ribosomal subunit protein bL31B.